The sequence spans 342 residues: N-acetyl-gamma-glutamyl-phosphate reductase (342 aa).

Residue cysteine 147 is part of the active site.

It belongs to the NAGSA dehydrogenase family. Type 1 subfamily.

The protein resides in the cytoplasm. It carries out the reaction N-acetyl-L-glutamate 5-semialdehyde + phosphate + NADP(+) = N-acetyl-L-glutamyl 5-phosphate + NADPH + H(+). Its pathway is amino-acid biosynthesis; L-arginine biosynthesis; N(2)-acetyl-L-ornithine from L-glutamate: step 3/4. Catalyzes the NADPH-dependent reduction of N-acetyl-5-glutamyl phosphate to yield N-acetyl-L-glutamate 5-semialdehyde. This chain is N-acetyl-gamma-glutamyl-phosphate reductase, found in Campylobacter jejuni (strain RM1221).